The chain runs to 205 residues: Ras-related protein RABB1a (205 aa).

13–20 (GDTGVGKS) is a GTP binding site. The Effector region motif lies at 35–43 (HDLTIGVEF). Residues 61-65 (DTAGQ), 119-122 (NKCD), and 149-150 (SA) each bind GTP. The tract at residues 179–205 (ANEPGITPGPFGGKDASSSQQRRGCCG) is disordered. Residues 194-205 (ASSSQQRRGCCG) show a composition bias toward polar residues. Residues Cys203 and Cys204 are each lipidated (S-geranylgeranyl cysteine).

It belongs to the small GTPase superfamily. Rab family.

It is found in the cell membrane. Intracellular vesicle trafficking and protein transport. This Arabidopsis thaliana (Mouse-ear cress) protein is Ras-related protein RABB1a (RABB1A).